The following is a 363-amino-acid chain: Ataxin-3 (363 aa).

The Josephin domain occupies 1-180 (MESIFHERQE…DCEADQLLQM (180 aa)). Residue Cys14 is the Nucleophile of the active site. Catalysis depends on His119, which acts as the Proton acceptor. Asn134 is an active-site residue. The segment covering 192 to 209 (IGEETAQSRDQRLPRSDV) has biased composition (basic and acidic residues). The segment at 192–212 (IGEETAQSRDQRLPRSDVDQA) is disordered. 3 UIM domains span residues 227–246 (EDEE…IDME), 247–266 (DEEA…SRQS), and 337–356 (SEED…ARNH). Over residues 260–290 (MQGSRQSEFSNSLPQNASQPPHTSQTDSLSS) the composition is skewed to polar residues. A disordered region spans residues 260 to 363 (MQGSRQSEFS…RNHLSTEEKK (104 aa)). The span at 353–363 (ARNHLSTEEKK) shows a compositional bias: basic and acidic residues.

Widely expressed.

It localises to the nucleus matrix. It is found in the nucleus. The protein localises to the lysosome membrane. The enzyme catalyses Thiol-dependent hydrolysis of ester, thioester, amide, peptide and isopeptide bonds formed by the C-terminal Gly of ubiquitin (a 76-residue protein attached to proteins as an intracellular targeting signal).. Its function is as follows. Deubiquitinating enzyme involved in protein homeostasis maintenance, transcription, cytoskeleton regulation, myogenesis and degradation of misfolded chaperone substrates. Binds long polyubiquitin chains and trims them, while it has weak or no activity against chains of 4 or less ubiquitins. Involved in degradation of misfolded chaperone substrates via its interaction with STUB1/CHIP: recruited to monoubiquitinated STUB1/CHIP, and restricts the length of ubiquitin chain attached to STUB1/CHIP substrates and preventing further chain extension. Interacts with key regulators of transcription and represses transcription: acts as a histone-binding protein that regulates transcription. Acts as a negative regulator of mTORC1 signaling in response to amino acid deprivation by mediating deubiquitination of RHEB, thereby promoting RHEB inactivation by the TSC-TBC complex. Regulates autophagy via the deubiquitination of 'Lys-402' of BECN1 leading to the stabilization of BECN1. The protein is Ataxin-3 (ATXN3) of Gallus gallus (Chicken).